Here is a 418-residue protein sequence, read N- to C-terminus: Serine hydroxymethyltransferase (418 aa).

(6S)-5,6,7,8-tetrahydrofolate is bound by residues L121 and 125 to 127; that span reads GHL. K230 is subject to N6-(pyridoxal phosphate)lysine. 356–358 is a (6S)-5,6,7,8-tetrahydrofolate binding site; the sequence is SPF.

The protein belongs to the SHMT family. As to quaternary structure, homodimer. Pyridoxal 5'-phosphate serves as cofactor.

The protein resides in the cytoplasm. It carries out the reaction (6R)-5,10-methylene-5,6,7,8-tetrahydrofolate + glycine + H2O = (6S)-5,6,7,8-tetrahydrofolate + L-serine. Its pathway is one-carbon metabolism; tetrahydrofolate interconversion. It participates in amino-acid biosynthesis; glycine biosynthesis; glycine from L-serine: step 1/1. In terms of biological role, catalyzes the reversible interconversion of serine and glycine with tetrahydrofolate (THF) serving as the one-carbon carrier. This reaction serves as the major source of one-carbon groups required for the biosynthesis of purines, thymidylate, methionine, and other important biomolecules. Also exhibits THF-independent aldolase activity toward beta-hydroxyamino acids, producing glycine and aldehydes, via a retro-aldol mechanism. This is Serine hydroxymethyltransferase from Shewanella sediminis (strain HAW-EB3).